A 296-amino-acid polypeptide reads, in one-letter code: NAD kinase (296 aa).

Catalysis depends on aspartate 72, which acts as the Proton acceptor. NAD(+) contacts are provided by residues 72–73 (DG), 146–147 (ND), arginine 157, lysine 174, aspartate 176, 187–192 (TAYALS), and glutamine 247.

The protein belongs to the NAD kinase family. The cofactor is a divalent metal cation.

Its subcellular location is the cytoplasm. It catalyses the reaction NAD(+) + ATP = ADP + NADP(+) + H(+). Involved in the regulation of the intracellular balance of NAD and NADP, and is a key enzyme in the biosynthesis of NADP. Catalyzes specifically the phosphorylation on 2'-hydroxyl of the adenosine moiety of NAD to yield NADP. The chain is NAD kinase from Pseudomonas fluorescens (strain ATCC BAA-477 / NRRL B-23932 / Pf-5).